A 218-amino-acid chain; its full sequence is Peptide methionine sulfoxide reductase A2 (218 aa).

Over residues 1-19 (MDSSLKTQEPQVVETSPSP) the composition is skewed to polar residues. Positions 1-30 (MDSSLKTQEPQVVETSPSPVAQEPPQVADK) are disordered. Ser205 carries the post-translational modification Phosphoserine.

The protein belongs to the MsrA Met sulfoxide reductase family.

The protein resides in the cytoplasm. It localises to the cytosol. It catalyses the reaction L-methionyl-[protein] + [thioredoxin]-disulfide + H2O = L-methionyl-(S)-S-oxide-[protein] + [thioredoxin]-dithiol. The catalysed reaction is [thioredoxin]-disulfide + L-methionine + H2O = L-methionine (S)-S-oxide + [thioredoxin]-dithiol. Its activity is regulated as follows. Activated during dark in short day conditions. Functionally, catalyzes the reduction of methionine sulfoxide (MetSO) to methionine in proteins. Plays a protective role against oxidative stress by restoring activity to proteins that have been inactivated by methionine oxidation. Prevents cellular oxidative damage in long nights. MSRA family specifically reduces the MetSO S-enantiomer. In Arabidopsis thaliana (Mouse-ear cress), this protein is Peptide methionine sulfoxide reductase A2 (MRSA2).